The sequence spans 479 residues: ATP synthase subunit beta, chloroplastic (479 aa).

156-163 (GGAGVGKT) is an ATP binding site.

The protein belongs to the ATPase alpha/beta chains family. F-type ATPases have 2 components, CF(1) - the catalytic core - and CF(0) - the membrane proton channel. CF(1) has five subunits: alpha(3), beta(3), gamma(1), delta(1), epsilon(1). CF(0) has four main subunits: a(1), b(1), b'(1) and c(9-12).

It is found in the plastid. Its subcellular location is the chloroplast thylakoid membrane. It catalyses the reaction ATP + H2O + 4 H(+)(in) = ADP + phosphate + 5 H(+)(out). Its function is as follows. Produces ATP from ADP in the presence of a proton gradient across the membrane. The catalytic sites are hosted primarily by the beta subunits. This chain is ATP synthase subunit beta, chloroplastic, found in Trichomanes davallioides (Kilau fern).